We begin with the raw amino-acid sequence, 289 residues long: Cell division protein ZipA (289 aa).

Residue Met-1 is a topological domain, periplasmic. The chain crosses the membrane as a helical span at residues 2-22 (DIGLREWLIVIGLIVIAGILF). Residues 23 to 289 (DGWRRMRGGK…HERRSLMQKR (267 aa)) are Cytoplasmic-facing. A disordered region spans residues 65–141 (HREPSFDEQD…KEREKAPAVA (77 aa)). Basic and acidic residues predominate over residues 81-99 (RETKERKGGKRQEEPRQGD). Residues 100-114 (LDLDEGLALEADPSD) show a composition bias toward acidic residues.

This sequence belongs to the ZipA family. In terms of assembly, interacts with FtsZ via their C-terminal domains.

The protein localises to the cell inner membrane. In terms of biological role, essential cell division protein that stabilizes the FtsZ protofilaments by cross-linking them and that serves as a cytoplasmic membrane anchor for the Z ring. Also required for the recruitment to the septal ring of downstream cell division proteins. The chain is Cell division protein ZipA from Pseudomonas aeruginosa (strain UCBPP-PA14).